Consider the following 129-residue polypeptide: uncharacterized protein (129 aa).

This sequence belongs to the asfivirus C129R family.

The protein localises to the virion. Its function is as follows. Plays a role in the inhibition of type I interferon signaling pathway. Mechanistically, specifically interacts with 2',3'-cGAMP and cleaves it via its phosphodiesterase activity. In turn, prevents 2',3'-cGAMP interaction with host ER-resident STING1 leading to inhibition of downstream signaling pathway and type I interferon production. This is an uncharacterized protein from African swine fever virus (strain Badajoz 1971 Vero-adapted) (Ba71V).